The primary structure comprises 682 residues: Potassium-transporting ATPase ATP-binding subunit (682 aa).

4 consecutive transmembrane segments (helical) span residues Pro-34–Val-54, Ile-58–Phe-78, Ile-219–Leu-239, and Val-254–Ile-274. Asp-307 (4-aspartylphosphate intermediate) is an active-site residue. ATP is bound by residues Asp-344, Glu-348, Phe-377–Ser-384, and Lys-395. Positions 518 and 522 each coordinate Mg(2+). 3 helical membrane passes run Phe-588–Met-608, Ala-616–Leu-636, and Leu-662–Ala-682.

Belongs to the cation transport ATPase (P-type) (TC 3.A.3) family. Type IA subfamily. In terms of assembly, the system is composed of three essential subunits: KdpA, KdpB and KdpC.

The protein resides in the cell inner membrane. It catalyses the reaction K(+)(out) + ATP + H2O = K(+)(in) + ADP + phosphate + H(+). Its function is as follows. Part of the high-affinity ATP-driven potassium transport (or Kdp) system, which catalyzes the hydrolysis of ATP coupled with the electrogenic transport of potassium into the cytoplasm. This subunit is responsible for energy coupling to the transport system and for the release of the potassium ions to the cytoplasm. In Salmonella dublin (strain CT_02021853), this protein is Potassium-transporting ATPase ATP-binding subunit.